The sequence spans 85 residues: Protein C4 (85 aa).

A lipid anchor (N-myristoyl glycine; by host) is attached at glycine 2. A disordered region spans residues 42–65; sequence LNPAPTSSPTSTRTETQLNGGNSR. The span at 44 to 57 shows a compositional bias: low complexity; it reads PAPTSSPTSTRTET.

This sequence belongs to the geminiviridae protein AC4/C4 family. As to quaternary structure, interacts with Arabidopsis thaliana RCH2, ASK7/ASK-eta and ASK6/ASK-zeta. Phosphorylated by Arabidopsis thaliana ASK7/ASK-eta mainly on threonine and serine residues. In terms of tissue distribution, expressed in vascular tissues, and especially in phloem cells.

It is found in the host cell membrane. Its function is as follows. Major determinant of pathogenesis that affects the hyperplastic response of the host to viral infection. Mediates the induction of cell division in permissive cells, mainly in phloem. May act as a suppressor of RNA-mediated gene silencing, also known as post-transcriptional gene silencing (PTGS), a mechanism of plant viral defense that limits the accumulation of viral RNAs. The protein is Protein C4 of Beet curly top virus (strain California/Logan) (BCTV).